A 249-amino-acid polypeptide reads, in one-letter code: MKFYKYCASGNDFVITNADRKEDRSSLAKELCNRYEGIGADGFIVILPHEKYDFEWEFYNNDGSRAAMCGNGSRAAAHFAHHINKINPSMIFLTGAGVIKAKVNQDKVEVSLGKIKSVQNTFEKLGKTWQLCDTGVPHLVHFCQSLDEFDTMLCQKMRQKYNANVNFVKILDENHLKVRTYERGVEDETLACGTGMGACFYLAFLNKKVQNKVKITPKSGEEMGFAYKNEELFFEGKVKYCFEANYNFS.

The substrate site is built by N11 and N60. The active-site Proton donor is the C69. Residues 70–71 (GN), N164, and 182–183 (ER) contribute to the substrate site. C192 acts as the Proton acceptor in catalysis. Residue 193-194 (GT) participates in substrate binding.

It belongs to the diaminopimelate epimerase family. As to quaternary structure, homodimer.

It is found in the cytoplasm. The enzyme catalyses (2S,6S)-2,6-diaminopimelate = meso-2,6-diaminopimelate. Its pathway is amino-acid biosynthesis; L-lysine biosynthesis via DAP pathway; DL-2,6-diaminopimelate from LL-2,6-diaminopimelate: step 1/1. In terms of biological role, catalyzes the stereoinversion of LL-2,6-diaminopimelate (L,L-DAP) to meso-diaminopimelate (meso-DAP), a precursor of L-lysine and an essential component of the bacterial peptidoglycan. The sequence is that of Diaminopimelate epimerase from Campylobacter jejuni subsp. doylei (strain ATCC BAA-1458 / RM4099 / 269.97).